A 158-amino-acid chain; its full sequence is Endoribonuclease YbeY (158 aa).

Residues His-119, His-123, and His-129 each coordinate Zn(2+).

Belongs to the endoribonuclease YbeY family. The cofactor is Zn(2+).

Its subcellular location is the cytoplasm. Its function is as follows. Single strand-specific metallo-endoribonuclease involved in late-stage 70S ribosome quality control and in maturation of the 3' terminus of the 16S rRNA. In Shewanella sediminis (strain HAW-EB3), this protein is Endoribonuclease YbeY.